Reading from the N-terminus, the 312-residue chain is MEMDTAVENPAVEKNGQPTPSSTSTATDAAPTPNAPNRPAPNTAGNRKRGVPEGVWRKCDSCGASLFYKEVQQRLNVCPQCDHHFYVSAWERVAQVLDDGTFEPMNEHLRPTDPLEFRDRRSYAERLVGEQKRTGLTDAVLTGTGMIRARRVAFAVTDSAFIMGSMGSVVGERLTRLIERATEQNLALIIISASGGGARMHEGILSLMQMAKVSAALSRYHAAGGLFISVLTNPTMGGVAASFASLGDLVFAEPKALIGFAGPRTIKATIGIELPEGFQTSEFLLEHGYIDRIVHRKSLKTEIATAIDYCGK.

The interval methionine 1–proline 52 is disordered. Low complexity predominate over residues proline 18 to threonine 32. Positions valine 55–lysine 312 constitute a CoA carboxyltransferase N-terminal domain. The Zn(2+) site is built by cysteine 59, cysteine 62, cysteine 78, and cysteine 81. Residues cysteine 59–cysteine 81 form a C4-type zinc finger.

It belongs to the AccD/PCCB family. In terms of assembly, acetyl-CoA carboxylase is a heterohexamer composed of biotin carboxyl carrier protein (AccB), biotin carboxylase (AccC) and two subunits each of ACCase subunit alpha (AccA) and ACCase subunit beta (AccD). Zn(2+) serves as cofactor.

It localises to the cytoplasm. The catalysed reaction is N(6)-carboxybiotinyl-L-lysyl-[protein] + acetyl-CoA = N(6)-biotinyl-L-lysyl-[protein] + malonyl-CoA. The protein operates within lipid metabolism; malonyl-CoA biosynthesis; malonyl-CoA from acetyl-CoA: step 1/1. In terms of biological role, component of the acetyl coenzyme A carboxylase (ACC) complex. Biotin carboxylase (BC) catalyzes the carboxylation of biotin on its carrier protein (BCCP) and then the CO(2) group is transferred by the transcarboxylase to acetyl-CoA to form malonyl-CoA. This chain is Acetyl-coenzyme A carboxylase carboxyl transferase subunit beta, found in Rhodopirellula baltica (strain DSM 10527 / NCIMB 13988 / SH1).